A 140-amino-acid chain; its full sequence is Large ribosomal subunit protein bL17 (140 aa).

Belongs to the bacterial ribosomal protein bL17 family. Part of the 50S ribosomal subunit. Contacts protein L32.

The polypeptide is Large ribosomal subunit protein bL17 (Beijerinckia indica subsp. indica (strain ATCC 9039 / DSM 1715 / NCIMB 8712)).